A 532-amino-acid polypeptide reads, in one-letter code: Protein FAM227B (532 aa).

A coiled-coil region spans residues 432 to 482; the sequence is DNKKDFKRVKQRIKDDIKFLREQQELIDKELDRIQAKASKNLQEVKNEFEN. Residues 494–532 are disordered; it reads KEEYGGSTSASESPQSMQSPQSSSSFPTISEDFNNVEEG. The span at 500–523 shows a compositional bias: low complexity; that stretch reads STSASESPQSMQSPQSSSSFPTIS.

Belongs to the FAM227 family.

This Mus musculus (Mouse) protein is Protein FAM227B (Fam227b).